The chain runs to 107 residues: Small integral membrane protein 19 (107 aa).

A helical transmembrane segment spans residues A25–A43. The interval R88–E107 is disordered. A compositionally biased stretch (polar residues) spans Q93 to E107.

The protein belongs to the SMIM19 family.

It is found in the membrane. This Mus musculus (Mouse) protein is Small integral membrane protein 19 (Smim19).